Consider the following 60-residue polypeptide: Large ribosomal subunit protein bL32 (60 aa).

The segment at 1-36 is disordered; sequence MAVQQNKKSPSKRGMHRSHNALNTPGLAIEPTTGET. Residues 9 to 19 are compositionally biased toward basic residues; that stretch reads SPSKRGMHRSH.

The protein belongs to the bacterial ribosomal protein bL32 family.

The chain is Large ribosomal subunit protein bL32 from Methylibium petroleiphilum (strain ATCC BAA-1232 / LMG 22953 / PM1).